A 309-amino-acid chain; its full sequence is Olfactory receptor 2AP1 (309 aa).

The Extracellular portion of the chain corresponds to 1-23 (MKNKTVLTEFILLGLTDVPELQV). The N-linked (GlcNAc...) asparagine glycan is linked to N3. Residues 24 to 47 (AVFTFLFLAYLLSILGNLTILILT) traverse the membrane as a helical segment. Residues 48 to 55 (LLDSHLQT) lie on the Cytoplasmic side of the membrane. A helical membrane pass occupies residues 56–77 (PMYFFLRNFSFLEISFTNIFIP). Over 78 to 98 (RVLISITTGNKSISFAGCFTQ) the chain is Extracellular. The N-linked (GlcNAc...) asparagine glycan is linked to N87. A disulfide bridge connects residues C95 and C187. The chain crosses the membrane as a helical span at residues 99 to 118 (YFFAMFLGATEFYLLAAMSY). The Cytoplasmic segment spans residues 119 to 137 (DRYVAICKPLHYTTIMSSR). The helical transmembrane segment at 138–156 (ICIQLIFCSWLGGLMAIIP) threads the bilayer. Residues 157–193 (TITLMSQQDFCASNRLNHYFCDYEPLLELSCSDTSLI) are Extracellular-facing. Residues 194–217 (EKVVFLVASVTLVVTLVLVILSYA) traverse the membrane as a helical segment. Residues 218 to 234 (FIIKTILKLPSAQQRTK) lie on the Cytoplasmic side of the membrane. Residues 235 to 257 (AFSTCSSHMIVISLSYGSCMFMY) traverse the membrane as a helical segment. The Extracellular segment spans residues 258–270 (INPSAKEGDTFNK). A helical transmembrane segment spans residues 271-290 (GVALLITSVAPLLNPFIYTL). Residues 291-309 (RNQQVKQPFKDMVKKLLNL) are Cytoplasmic-facing.

The protein belongs to the G-protein coupled receptor 1 family.

The protein resides in the cell membrane. Odorant receptor. The polypeptide is Olfactory receptor 2AP1 (OR2AP1) (Homo sapiens (Human)).